The primary structure comprises 281 residues: Ribosomal RNA small subunit methyltransferase J (281 aa).

Residues 129 to 130, 145 to 146, and D199 each bind S-adenosyl-L-methionine; these read RD and ER.

The protein belongs to the methyltransferase superfamily. RsmJ family.

The protein resides in the cytoplasm. It carries out the reaction guanosine(1516) in 16S rRNA + S-adenosyl-L-methionine = N(2)-methylguanosine(1516) in 16S rRNA + S-adenosyl-L-homocysteine + H(+). Functionally, specifically methylates the guanosine in position 1516 of 16S rRNA. The chain is Ribosomal RNA small subunit methyltransferase J from Laribacter hongkongensis (strain HLHK9).